A 148-amino-acid chain; its full sequence is Large ribosomal subunit protein bL9 (148 aa).

It belongs to the bacterial ribosomal protein bL9 family.

Functionally, binds to the 23S rRNA. This chain is Large ribosomal subunit protein bL9, found in Aeromonas salmonicida (strain A449).